The primary structure comprises 322 residues: ATP-dependent 6-phosphofructokinase (322 aa).

Glycine 11 serves as a coordination point for ATP. Residue 21–25 (RAVTR) participates in ADP binding. ATP contacts are provided by residues 72-73 (RC) and 102-105 (GDGS). Aspartate 103 serves as a coordination point for Mg(2+). 127–129 (TID) is a binding site for substrate. The active-site Proton acceptor is aspartate 129. Arginine 156 contacts ADP. Substrate contacts are provided by residues arginine 164 and 171 to 173 (MGR). ADP contacts are provided by residues 187 to 189 (GAE), arginine 213, and 215 to 217 (KKH). Residues glutamate 224, arginine 245, and 251–254 (HIQR) contribute to the substrate site.

Belongs to the phosphofructokinase type A (PFKA) family. ATP-dependent PFK group I subfamily. Prokaryotic clade 'B1' sub-subfamily. Homotetramer. Mg(2+) serves as cofactor.

The protein localises to the cytoplasm. The catalysed reaction is beta-D-fructose 6-phosphate + ATP = beta-D-fructose 1,6-bisphosphate + ADP + H(+). Its pathway is carbohydrate degradation; glycolysis; D-glyceraldehyde 3-phosphate and glycerone phosphate from D-glucose: step 3/4. Its activity is regulated as follows. Allosterically activated by ADP and other diphosphonucleosides, and allosterically inhibited by phosphoenolpyruvate. Its function is as follows. Catalyzes the phosphorylation of D-fructose 6-phosphate to fructose 1,6-bisphosphate by ATP, the first committing step of glycolysis. The sequence is that of ATP-dependent 6-phosphofructokinase from Staphylococcus epidermidis (strain ATCC 35984 / DSM 28319 / BCRC 17069 / CCUG 31568 / BM 3577 / RP62A).